The chain runs to 473 residues: MKSILDGLADTTFRTITTDLLYVGSNDIQYEDMKGDMASKLGYYPQKFPLSSFRGDPFQEKMTGGDDSLLSIIPSEQVNITEFYNKSLSTFKDNEENIQCGENFMDMECFMILNPSQQLAIAVLSLTLGTFTVLENLLVLCVILHSRSLRCRPSYHFIGSLAVADLLGSVIFVYSFVDFHVFHRKDSPNVFLFKLGGVTASFTASVGSLFLTAIDRYISIHRPLAYKRIVTRPKAVVAFCVMWTIAIVIAVLPLLGWNCKKLNSVCSDIFPLIDETYLMFWIGVTSILLLFIVYAYMYILWKAHSHAVRMLQRGTQKSIIIQSTEDGKVQITRPDQTRMDIRLAKTLVLILVVLIICWGPLLAIMVYDVFGKMNKLIKTIFAFCSMLCLLNSTVNPIIYALRSKDLRHAFRSMFPTCEGTAQPLDNSMESDCQHKHANNAGNVHRAAESCIKSTVKIAKVTMSVSTDTTAEAL.

At 1–118 (MKSILDGLAD…CFMILNPSQQ (118 aa)) the chain is on the extracellular side. Positions 2 to 23 (KSILDGLADTTFRTITTDLLYV) are required for mitochondrial localization. Residues Asn-79 and Asn-85 are each glycosylated (N-linked (GlcNAc...) asparagine). A helical transmembrane segment spans residues 119–144 (LAIAVLSLTLGTFTVLENLLVLCVIL). The Cytoplasmic portion of the chain corresponds to 145–156 (HSRSLRCRPSYH). The chain crosses the membrane as a helical span at residues 157–177 (FIGSLAVADLLGSVIFVYSFV). Topologically, residues 178–189 (DFHVFHRKDSPN) are extracellular. A helical transmembrane segment spans residues 190–214 (VFLFKLGGVTASFTASVGSLFLTAI). Over 215–234 (DRYISIHRPLAYKRIVTRPK) the chain is Cytoplasmic. Residues 235-257 (AVVAFCVMWTIAIVIAVLPLLGW) traverse the membrane as a helical segment. At 258-275 (NCKKLNSVCSDIFPLIDE) the chain is on the extracellular side. Residues 276-301 (TYLMFWIGVTSILLLFIVYAYMYILW) form a helical membrane-spanning segment. The Cytoplasmic portion of the chain corresponds to 302 to 346 (KAHSHAVRMLQRGTQKSIIIQSTEDGKVQITRPDQTRMDIRLAKT). The chain crosses the membrane as a helical span at residues 347–367 (LVLILVVLIICWGPLLAIMVY). Over 368-379 (DVFGKMNKLIKT) the chain is Extracellular. Residues 380-401 (IFAFCSMLCLLNSTVNPIIYAL) traverse the membrane as a helical segment. Residues 402–473 (RSKDLRHAFR…VSTDTTAEAL (72 aa)) are Cytoplasmic-facing. Residue Cys-417 is the site of S-palmitoyl cysteine attachment.

This sequence belongs to the G-protein coupled receptor 1 family. Post-translationally, palmitoylation at Cys-417 is important for recruitment at both plasma membrane and lipid rafts and association with G protein alpha subunits.

Its subcellular location is the cell membrane. The protein localises to the mitochondrion outer membrane. It localises to the cell projection. The protein resides in the axon. It is found in the presynapse. G-protein coupled receptor for cannabinoids. Mediates many cannabinoid-induced effects in the central nervous system (CNS), as well as in peripheral tissues. Regulates cellular respiration and energy production in response to cannabinoids. Signaling typically involves reduction in cyclic AMP. This chain is Cannabinoid receptor 1 (CNR1), found in Taeniopygia guttata (Zebra finch).